A 132-amino-acid polypeptide reads, in one-letter code: Tyrosine phosphatase-like protein N2 (132 aa).

The Tyrosine-protein phosphatase domain maps to 1-132; sequence MQGPMKNTVA…DILGRFQRVF (132 aa).

The protein belongs to the protein-tyrosine phosphatase family.

The sequence is that of Tyrosine phosphatase-like protein N2 (N4) from Microplitis demolitor (Parasitoid wasp).